A 393-amino-acid chain; its full sequence is DNA/RNA-binding protein KIN17 (393 aa).

The segment at 28–50 (CQMCQKQCRDENGFKCHCMSESH) adopts a C2H2-type zinc-finger fold. The winged helix-turn-helix (wHTH) stretch occupies residues 51–160 (QRQLLLASEN…RQLELEKKKK (110 aa)). K135 carries the post-translational modification N6,N6,N6-trimethyllysine; by METTL22; in vitro. N6-methyllysine is present on K135. Residues 147-180 (ETIRRQLELEKKKKQDLDDEEKTAKFIEEQVRRG) adopt a coiled-coil conformation. The segment covering 209-224 (KGACSSSGATSSKSST) has biased composition (low complexity). Residues 209–260 (KGACSSSGATSSKSSTLGPSALKTIGSSASVKRKESSQSSTQSKEKKKKKSA) are disordered. A coiled-coil region spans residues 250–277 (QSKEKKKKKSALDEIMEIEEEKKRTART). The interval 284 to 334 (EIIVKIITKKLGEKYHKKKAIVKEVIDKYTAVVKMIDSGDKLKLDQTHLET) is C-terminal subdomain A. A C-terminal subdomain B region spans residues 340–391 (GKRILVLNGGYRGNEGTLESINEKTFSATIVIETGPLKGRRVEGIQYEDISK).

Belongs to the KIN17 family. Associated with DNA polymerase alpha, RFC1 and cyclin A, in multiprotein DNA replication complexes. Also associates with replication origins at the G1/S phase boundary and throughout the S phase in vivo. In terms of assembly, (Microbial infection) Interacts with SV40 large T antigen. As to expression, ubiquitously expressed in all tissues examined, with highest levels in skeletal muscle, heart and testis. Differentially expressed in non-tumorigenic and tumorigenic cell lines. Highly expressed in proliferating epithelial keratinocyte cells in vitro (at protein level).

It localises to the nucleus. Its subcellular location is the cytoplasm. In terms of biological role, involved in DNA replication and the cellular response to DNA damage. May participate in DNA replication factories and create a bridge between DNA replication and repair mediated by high molecular weight complexes. May play a role in illegitimate recombination and regulation of gene expression. May participate in mRNA processing. Binds, in vitro, to double-stranded DNA. Also shown to bind preferentially to curved DNA in vitro and in vivo. Binds via its C-terminal domain to RNA in vitro. This Homo sapiens (Human) protein is DNA/RNA-binding protein KIN17.